A 287-amino-acid chain; its full sequence is MDKVKIALQYLMPKHLVSRIVGKFAAAEAGFVTTAFIKWFIKQYGINMSEALHSNPEAYKTFNDFFTRELKPGLRPIDQAEDIMVHPVDGAVSQLGPIEDGRIFQAKGHHYSALALLGGQADDAARFEEGDFATIYLAPKDYHRIHMPIKGTLSKMTYVPGELFSVNPLTARNVPGLFARNERVVAIFETDKGPLAMVLVGATIVASIETVWAGTVTPPTGKKVFTWDYPTEGPEALTLEKGAEMGRFKLGSTVVMLFAKDAIDDFADGVKPEAVTRMGQPFAKLED.

Catalysis depends on charge relay system; for autoendoproteolytic cleavage activity residues D89, H146, and S252. Catalysis depends on S252, which acts as the Schiff-base intermediate with substrate; via pyruvic acid; for decarboxylase activity. S252 is modified (pyruvic acid (Ser); by autocatalysis).

Belongs to the phosphatidylserine decarboxylase family. PSD-B subfamily. Prokaryotic type I sub-subfamily. In terms of assembly, heterodimer of a large membrane-associated beta subunit and a small pyruvoyl-containing alpha subunit. Pyruvate is required as a cofactor. Post-translationally, is synthesized initially as an inactive proenzyme. Formation of the active enzyme involves a self-maturation process in which the active site pyruvoyl group is generated from an internal serine residue via an autocatalytic post-translational modification. Two non-identical subunits are generated from the proenzyme in this reaction, and the pyruvate is formed at the N-terminus of the alpha chain, which is derived from the carboxyl end of the proenzyme. The autoendoproteolytic cleavage occurs by a canonical serine protease mechanism, in which the side chain hydroxyl group of the serine supplies its oxygen atom to form the C-terminus of the beta chain, while the remainder of the serine residue undergoes an oxidative deamination to produce ammonia and the pyruvoyl prosthetic group on the alpha chain. During this reaction, the Ser that is part of the protease active site of the proenzyme becomes the pyruvoyl prosthetic group, which constitutes an essential element of the active site of the mature decarboxylase.

The protein resides in the cell membrane. It carries out the reaction a 1,2-diacyl-sn-glycero-3-phospho-L-serine + H(+) = a 1,2-diacyl-sn-glycero-3-phosphoethanolamine + CO2. It participates in phospholipid metabolism; phosphatidylethanolamine biosynthesis; phosphatidylethanolamine from CDP-diacylglycerol: step 2/2. Functionally, catalyzes the formation of phosphatidylethanolamine (PtdEtn) from phosphatidylserine (PtdSer). This is Phosphatidylserine decarboxylase proenzyme from Shewanella amazonensis (strain ATCC BAA-1098 / SB2B).